The chain runs to 332 residues: Adenosine deaminase (332 aa).

Positions 12 and 14 each coordinate Zn(2+). Positions 14, 16, and 170 each coordinate substrate. Histidine 197 contacts Zn(2+). The active-site Proton donor is glutamate 200. Position 278 (aspartate 278) interacts with Zn(2+). Aspartate 279 is a substrate binding site.

It belongs to the metallo-dependent hydrolases superfamily. Adenosine and AMP deaminases family. Adenosine deaminase subfamily. The cofactor is Zn(2+).

It catalyses the reaction adenosine + H2O + H(+) = inosine + NH4(+). The enzyme catalyses 2'-deoxyadenosine + H2O + H(+) = 2'-deoxyinosine + NH4(+). Functionally, catalyzes the hydrolytic deamination of adenosine and 2-deoxyadenosine. The sequence is that of Adenosine deaminase from Erwinia tasmaniensis (strain DSM 17950 / CFBP 7177 / CIP 109463 / NCPPB 4357 / Et1/99).